Here is a 153-residue protein sequence, read N- to C-terminus: Ribonuclease H (153 aa).

One can recognise an RNase H type-1 domain in the interval 7–148 (PADLVEMWTD…ADMLANQGVA (142 aa)). Mg(2+)-binding residues include Asp-16, Glu-54, Asp-76, and Asp-140.

The protein belongs to the RNase H family. As to quaternary structure, monomer. Mg(2+) is required as a cofactor.

It is found in the cytoplasm. It catalyses the reaction Endonucleolytic cleavage to 5'-phosphomonoester.. Its function is as follows. Endonuclease that specifically degrades the RNA of RNA-DNA hybrids. The sequence is that of Ribonuclease H from Bordetella avium (strain 197N).